The sequence spans 428 residues: Protein CANDIDATE G-PROTEIN COUPLED RECEPTOR 6 (428 aa).

An N-terminal signal peptide occupies residues 1–22 (MTILPFLAAVFVLQLLSTLTVA). N-linked (GlcNAc...) asparagine glycosylation is found at N31, N89, and N157. 7 consecutive transmembrane segments (helical) span residues 173 to 193 (LYLVFFLCYLSFLCFWLCFCW), 202 to 222 (IHLLMTALLLVKSLTLICAAV), 238 to 258 (IVFYIFQFISVVLLFMVIVLI), 276 to 296 (LLVIVVPLQVLANIASIVIGE), 310 to 330 (IFFLADITCCCAIVFAMVWSM), 356 to 376 (FYVLVIGYLFFTRIVVVVMKM), and 385 to 405 (VSNAAEEIATLSFYCLMFYMF).

The protein belongs to the LU7TM family.

It localises to the membrane. G-protein coupled receptor. Plays a role in plants and microbes interactions. In Arabidopsis thaliana (Mouse-ear cress), this protein is Protein CANDIDATE G-PROTEIN COUPLED RECEPTOR 6.